A 275-amino-acid polypeptide reads, in one-letter code: Large ribosomal subunit protein uL2 (275 aa).

Positions Arg-221–Lys-275 are disordered. The span at Lys-253 to Arg-262 shows a compositional bias: basic residues.

The protein belongs to the universal ribosomal protein uL2 family. As to quaternary structure, part of the 50S ribosomal subunit. Forms a bridge to the 30S subunit in the 70S ribosome.

Functionally, one of the primary rRNA binding proteins. Required for association of the 30S and 50S subunits to form the 70S ribosome, for tRNA binding and peptide bond formation. It has been suggested to have peptidyltransferase activity; this is somewhat controversial. Makes several contacts with the 16S rRNA in the 70S ribosome. The polypeptide is Large ribosomal subunit protein uL2 (Wigglesworthia glossinidia brevipalpis).